The following is a 402-amino-acid chain: GTPase HflX (402 aa).

The region spanning Asp181–Ile350 is the Hflx-type G domain. GTP-binding positions include Gly187 to Thr194, Phe212 to Thr216, Asp233 to Gly236, Asn300 to Asp303, and Ser328 to Lys330. Residues Thr194 and Thr214 each coordinate Mg(2+).

It belongs to the TRAFAC class OBG-HflX-like GTPase superfamily. HflX GTPase family. In terms of assembly, monomer. Associates with the 50S ribosomal subunit. It depends on Mg(2+) as a cofactor.

The protein resides in the cytoplasm. Functionally, GTPase that associates with the 50S ribosomal subunit and may have a role during protein synthesis or ribosome biogenesis. This Methanocaldococcus jannaschii (strain ATCC 43067 / DSM 2661 / JAL-1 / JCM 10045 / NBRC 100440) (Methanococcus jannaschii) protein is GTPase HflX.